Consider the following 390-residue polypeptide: Queuine tRNA-ribosyltransferase (390 aa).

Asp-92 (proton acceptor) is an active-site residue. Substrate-binding positions include 92–96 (DSGGF), Asp-146, Gln-195, and Gly-222. Positions 253 to 259 (GVGTPED) are RNA binding. Residue Asp-272 is the Nucleophile of the active site. The interval 277–281 (TRNAR) is RNA binding; important for wobble base 34 recognition. Zn(2+)-binding residues include Cys-310, Cys-312, Cys-315, and His-354.

It belongs to the queuine tRNA-ribosyltransferase family. As to quaternary structure, homodimer. Within each dimer, one monomer is responsible for RNA recognition and catalysis, while the other monomer binds to the replacement base PreQ1. Zn(2+) serves as cofactor.

The catalysed reaction is 7-aminomethyl-7-carbaguanine + guanosine(34) in tRNA = 7-aminomethyl-7-carbaguanosine(34) in tRNA + guanine. It participates in tRNA modification; tRNA-queuosine biosynthesis. In terms of biological role, catalyzes the base-exchange of a guanine (G) residue with the queuine precursor 7-aminomethyl-7-deazaguanine (PreQ1) at position 34 (anticodon wobble position) in tRNAs with GU(N) anticodons (tRNA-Asp, -Asn, -His and -Tyr). Catalysis occurs through a double-displacement mechanism. The nucleophile active site attacks the C1' of nucleotide 34 to detach the guanine base from the RNA, forming a covalent enzyme-RNA intermediate. The proton acceptor active site deprotonates the incoming PreQ1, allowing a nucleophilic attack on the C1' of the ribose to form the product. After dissociation, two additional enzymatic reactions on the tRNA convert PreQ1 to queuine (Q), resulting in the hypermodified nucleoside queuosine (7-(((4,5-cis-dihydroxy-2-cyclopenten-1-yl)amino)methyl)-7-deazaguanosine). The protein is Queuine tRNA-ribosyltransferase of Verminephrobacter eiseniae (strain EF01-2).